We begin with the raw amino-acid sequence, 245 residues long: Outer dense fiber protein 1 (245 aa).

Phosphoserine occurs at positions 5 and 10. Residues 34–38 form repeat 1; it reads RCLCD. Residues 34 to 78 form a 2 X 5 AA repeats of [RC]-C-L-C-D region; the sequence is RCLCDLYMHPYCCCDLHPYPYCLCYSKRSRSCGLCDLYYPCCLCD. Ser64 bears the Phosphoserine mark. Repeat 2 spans residues 74–78; it reads CCLCD. Residues Ser87, Ser108, Ser109, Ser137, Ser153, Ser175, and Ser180 each carry the phosphoserine modification. A C-X-P repeat region region spans residues 195–233; it reads CNPCNPCSPCSPCGPCGPCGPCGPCGPCGPCDPCNPCYP.

In terms of assembly, interacts (via leucine zipper motif) with TCP11. Interacts with SPAG4. Interacts with KLC3. Interacts with CCDC42. Testis. Specifically located to the round spermatid layer and to the luminally-oriented cytoplasm of elongated spermatids.

The protein localises to the cell projection. It is found in the cilium. Its subcellular location is the flagellum. The protein resides in the cytoplasm. It localises to the cytoskeleton. The protein localises to the microtubule organizing center. It is found in the centrosome. Its function is as follows. Component of the outer dense fibers (ODF) of spermatozoa. ODF are filamentous structures located on the outside of the axoneme in the midpiece and principal piece of the mammalian sperm tail and may help to maintain the passive elastic structures and elastic recoil of the sperm tail. In Rattus norvegicus (Rat), this protein is Outer dense fiber protein 1 (Odf1).